The primary structure comprises 401 residues: Cysteine desulfurase (401 aa).

Pyridoxal 5'-phosphate is bound by residues 72-73, Asn-151, Gln-179, and 199-201; these read AT and SAH. Lys-202 is modified (N6-(pyridoxal phosphate)lysine). Residue Thr-237 coordinates pyridoxal 5'-phosphate. The active-site Cysteine persulfide intermediate is Cys-324. Cys-324 is a [2Fe-2S] cluster binding site.

Belongs to the class-V pyridoxal-phosphate-dependent aminotransferase family. NifS/IscS subfamily. Homodimer. Pyridoxal 5'-phosphate is required as a cofactor.

It carries out the reaction (sulfur carrier)-H + L-cysteine = (sulfur carrier)-SH + L-alanine. Its function is as follows. Catalyzes the removal of elemental sulfur atoms from cysteine to produce alanine. Seems to participate in the biosynthesis of the nitrogenase metalloclusters by providing the inorganic sulfur required for the Fe-S core formation. The sequence is that of Cysteine desulfurase from Enterobacter agglomerans (Erwinia herbicola).